A 333-amino-acid polypeptide reads, in one-letter code: Tetraacyldisaccharide 4'-kinase (333 aa).

55-62 (TIGGNGKT) serves as a coordination point for ATP.

This sequence belongs to the LpxK family.

It catalyses the reaction a lipid A disaccharide + ATP = a lipid IVA + ADP + H(+). The protein operates within glycolipid biosynthesis; lipid IV(A) biosynthesis; lipid IV(A) from (3R)-3-hydroxytetradecanoyl-[acyl-carrier-protein] and UDP-N-acetyl-alpha-D-glucosamine: step 6/6. In terms of biological role, transfers the gamma-phosphate of ATP to the 4'-position of a tetraacyldisaccharide 1-phosphate intermediate (termed DS-1-P) to form tetraacyldisaccharide 1,4'-bis-phosphate (lipid IVA). In Blochmanniella floridana, this protein is Tetraacyldisaccharide 4'-kinase.